The sequence spans 278 residues: Large ribosomal subunit protein uL2 (278 aa).

2 disordered regions span residues 29 to 57 and 224 to 278; these read PEKS…QGGG and VAMN…NKKR. Positions 258 to 278 are enriched in basic residues; the sequence is RSPKKASNKYIVRRRKTNKKR.

The protein belongs to the universal ribosomal protein uL2 family. In terms of assembly, part of the 50S ribosomal subunit. Forms a bridge to the 30S subunit in the 70S ribosome.

Its function is as follows. One of the primary rRNA binding proteins. Required for association of the 30S and 50S subunits to form the 70S ribosome, for tRNA binding and peptide bond formation. It has been suggested to have peptidyltransferase activity; this is somewhat controversial. Makes several contacts with the 16S rRNA in the 70S ribosome. The protein is Large ribosomal subunit protein uL2 of Streptomyces griseus subsp. griseus (strain JCM 4626 / CBS 651.72 / NBRC 13350 / KCC S-0626 / ISP 5235).